The following is a 2290-amino-acid chain: Armadillo repeat-containing X-linked protein 4 (2290 aa).

The helical transmembrane segment at 7–24 (VGWVTAGLVIWAGTCYYI) threads the bilayer. Disordered regions lie at residues 517-549 (QGEALPNTRGKARGKAKAKCKTGPGMDMKTCTQ), 564-583 (SRVDGRGNPNATSKAGTKAD), 967-988 (KVRGNSNAVPKAEAGADTVGSA), 1014-1087 (AVPK…ACRK), 1302-1430 (GSWA…ANSG), 1521-1715 (GSWG…RSED), 1911-1931 (SNTFRSKSGKDASFESGAGDN), and 1954-1973 (NENTSEDKSAPKAKAKKSSE). Residues 526–536 (GKARGKAKAKC) are compositionally biased toward basic residues. A compositionally biased stretch (polar residues) spans 1073–1087 (TSESEGGSGTQACRK). Composition is skewed to gly residues over residues 1328-1341 (SWAGAGGQASGGSM) and 1403-1414 (AGAGGQAGGGSK). Residues 1419–1430 (DQSSGRSWANSG) show a composition bias toward polar residues. The span at 1521 to 1535 (GSWGGASGQDVGGSR) shows a compositional bias: gly residues. A compositionally biased stretch (polar residues) spans 1537 to 1558 (GPTNQSSAGSWDSPGSQVSGSC). 2 stretches are compositionally biased toward gly residues: residues 1581–1598 (IGGGFWPGAGDQTGGGSR) and 1609–1623 (GSWGVAGGQVLGGAR). The segment covering 1628 to 1645 (DQSSGGSWAGTGNQSSGR) has biased composition (polar residues). Residues 1674-1687 (GAGSQASGESWAGS) show a composition bias toward low complexity. ARM repeat units lie at residues 2031–2071 (RCKH…NSAD), 2073–2112 (SYSHEVVRNVGGISVIESLLNNPYPSVRQKALNALNNISV), 2153–2192 (ITSEYQHMVTNYISEFLRLLTVGSGETKDHVLGMLLNFSK), and 2194–2234 (PSMT…NINY).

It belongs to the eutherian X-chromosome-specific Armcx family.

The protein resides in the membrane. The polypeptide is Armadillo repeat-containing X-linked protein 4 (ARMCX4) (Homo sapiens (Human)).